Here is a 197-residue protein sequence, read N- to C-terminus: Phosphoheptose isomerase (197 aa).

In terms of domain architecture, SIS spans 41–197; it reads VVETFRRGGK…EIVERTLFEE (157 aa). Substrate is bound at residue 56–58; it reads NGG. Histidine 65 and glutamate 69 together coordinate Zn(2+). Substrate contacts are provided by residues glutamate 69, 98–99, 124–126, serine 129, and glutamine 176; these read ND and STS. The Zn(2+) site is built by glutamine 176 and histidine 184.

It belongs to the SIS family. GmhA subfamily. Zn(2+) serves as cofactor.

Its subcellular location is the cytoplasm. It carries out the reaction 2 D-sedoheptulose 7-phosphate = D-glycero-alpha-D-manno-heptose 7-phosphate + D-glycero-beta-D-manno-heptose 7-phosphate. It functions in the pathway carbohydrate biosynthesis; D-glycero-D-manno-heptose 7-phosphate biosynthesis; D-glycero-alpha-D-manno-heptose 7-phosphate and D-glycero-beta-D-manno-heptose 7-phosphate from sedoheptulose 7-phosphate: step 1/1. Catalyzes the isomerization of sedoheptulose 7-phosphate in D-glycero-D-manno-heptose 7-phosphate. The sequence is that of Phosphoheptose isomerase from Roseiflexus sp. (strain RS-1).